The primary structure comprises 449 residues: MSHYDLILRNGNVVCPDGVRKADIAVSDGKIVLIAEEIPGDAKEIIDAAGKHIFPGITDGHVHFNDPGRTEWETITTGSSALAAGGGVAYFDMPLNCSPCTLDAVNFNNKLAVAQKDSLVDYGFWGGLTSANLDKLDELAECGVIGFKAFACHSGIDEFPRMDDYTALVGMEKLAKLGLPLMVHCENAEITKELTELSLANNRTGVRDYFAARPPITEIENVSRMITFAEETGCKLIIAHISTAKAVELVAQARARGVDVYCETIGHYLYLTGDDVERLGTVAKCSPPIRDGENQLQMWGRLFNDNIAFVSSDHSPCDPKLKNGEFMRVWGGISACQTTLQGLLTHAYHDRKFPLVKIAQLTAQHVNEIFKIKDKGQIALGYDADFALVDLDHEFTLQAEDLFYKHKVSPYVGDRFRGSVSQTILRGTTIYKDGKIVSQPIGKHLRPHQ.

Residues histidine 61, histidine 63, lysine 148, histidine 184, histidine 240, and aspartate 313 each contribute to the Zn(2+) site. N6-carboxylysine is present on lysine 148.

It belongs to the metallo-dependent hydrolases superfamily. Allantoinase family. Homotetramer. It depends on Zn(2+) as a cofactor. Post-translationally, carboxylation allows a single lysine to coordinate two zinc ions.

It catalyses the reaction (S)-allantoin + H2O = allantoate + H(+). The protein operates within nitrogen metabolism; (S)-allantoin degradation; allantoate from (S)-allantoin: step 1/1. Its function is as follows. Catalyzes the conversion of allantoin (5-ureidohydantoin) to allantoic acid by hydrolytic cleavage of the five-member hydantoin ring. The polypeptide is Allantoinase (Desulfitobacterium hafniense (strain DSM 10664 / DCB-2)).